Consider the following 412-residue polypeptide: Branched-chain alpha-ketoacid dehydrogenase kinase (412 aa).

The transit peptide at 1-30 directs the protein to the mitochondrion; it reads MILASVLRSGPGGGLPLRPLLGPALALRAR. S31 is subject to Phosphoserine. S52 carries the post-translational modification Phosphoserine; by autocatalysis. The Histidine kinase domain maps to 159–404; the sequence is LDDHKDVVTL…DVYLRLRHID (246 aa). An N6-acetyllysine mark is found at K192 and K233. Residues N279 and D315 each contribute to the ATP site. Position 279 (N279) interacts with Mg(2+). Residues V328, D330, and F333 each contribute to the K(+) site. Positions 334 and 335 each coordinate ATP. 2 positions are modified to phosphoserine: S356 and S360. Positions 364, 367, and 370 each coordinate ATP. G367 provides a ligand contact to K(+).

This sequence belongs to the PDK/BCKDK protein kinase family. Homodimer. Homotetramer. Dimerizes through interaction of two opposing nucleotide-binding domains. Interacts with E2 component of the branched-chain alpha-ketoacid dehydrogenase (BCKDH) complex. Competes with BCKDK for binding to the E2 component; this interaction is modulated by branched-chain alpha-keto acids. At steady state, BCKDH holoenzyme contains BCKDK and BCKDHA is phosphorylated. In response to high levels of branched-chain alpha-keto acids, the inhibitory BCKDK is replaced by activating PPM1K leading to BCKDHA dephosphorylation and BCAA degradation. Autophosphorylated. As to expression, ubiquitous.

The protein localises to the mitochondrion matrix. It carries out the reaction L-seryl-[3-methyl-2-oxobutanoate dehydrogenase] + ATP = O-phospho-L-seryl-[3-methyl-2-oxobutanoate dehydrogenase] + ADP + H(+). The catalysed reaction is L-seryl-[protein] + ATP = O-phospho-L-seryl-[protein] + ADP + H(+). It participates in protein modification. With respect to regulation, allosterically inhibited by certain thiazoles and thiophenes: thiazoles increase interaction with DBT/BCKDH-E2, whereas thiophenes reduce this interaction. Inhibited by 3,6- dichlorobenzo[b]thiophene-2-carboxylic acid (BT2). The ATP binding is mediated by both potassium and magnesium ions. Its function is as follows. Serine/threonine-protein kinase component of macronutrients metabolism. Forms a functional kinase and phosphatase pair with PPM1K, serving as a metabolic regulatory node that coordinates branched-chain amino acids (BCAAs) with glucose and lipid metabolism via two distinct phosphoprotein targets: mitochondrial BCKDHA subunit of the branched-chain alpha-ketoacid dehydrogenase (BCKDH) complex and cytosolic ACLY, a lipogenic enzyme of Krebs cycle. Phosphorylates and inactivates mitochondrial BCKDH complex a multisubunit complex consisting of three multimeric components each involved in different steps of BCAA catabolism: E1 composed of BCKDHA and BCKDHB, E2 core composed of DBT monomers, and E3 composed of DLD monomers. Associates with the E2 component of BCKDH complex and phosphorylates BCKDHA on Ser-337, leading to conformational changes that interrupt substrate channeling between E1 and E2 and inactivates the BCKDH complex. Phosphorylates ACLY on Ser-455 in response to changes in cellular carbohydrate abundance such as occurs during fasting to feeding metabolic transition. Refeeding stimulates MLXIPL/ChREBP transcription factor, leading to increased BCKDK to PPM1K expression ratio, phosphorylation and activation of ACLY that ultimately results in the generation of malonyl-CoA and oxaloacetate immediate substrates of de novo lipogenesis and glucogenesis, respectively. Recognizes phosphosites having SxxE/D canonical motif. In Homo sapiens (Human), this protein is Branched-chain alpha-ketoacid dehydrogenase kinase.